The chain runs to 464 residues: tRNA modification GTPase MnmE (464 aa).

Residues Arg25, Glu87, and Lys130 each contribute to the (6S)-5-formyl-5,6,7,8-tetrahydrofolate site. Residues 226-386 form the TrmE-type G domain; it reads GLSVVLAGQP…LRAELLRIAG (161 aa). Asn236 lines the K(+) pocket. GTP-binding positions include 236 to 241, 255 to 261, and 280 to 283; these read NVGKSS, TPIAGTT, and DTAG. Residue Ser240 participates in Mg(2+) binding. Residues Thr255, Ile257, and Thr260 each contribute to the K(+) site. Thr261 contacts Mg(2+). Lys464 provides a ligand contact to (6S)-5-formyl-5,6,7,8-tetrahydrofolate.

The protein belongs to the TRAFAC class TrmE-Era-EngA-EngB-Septin-like GTPase superfamily. TrmE GTPase family. As to quaternary structure, homodimer. Heterotetramer of two MnmE and two MnmG subunits. Requires K(+) as cofactor.

The protein resides in the cytoplasm. In terms of biological role, exhibits a very high intrinsic GTPase hydrolysis rate. Involved in the addition of a carboxymethylaminomethyl (cmnm) group at the wobble position (U34) of certain tRNAs, forming tRNA-cmnm(5)s(2)U34. The protein is tRNA modification GTPase MnmE of Burkholderia ambifaria (strain MC40-6).